Here is a 582-residue protein sequence, read N- to C-terminus: Colicin-E9 (582 aa).

5 disordered regions span residues 1–74 (MSGG…SGGG), 246–270 (SPGV…NTRD), 294–321 (PDQV…EAAE), 422–489 (ADAA…IADK), and 510–542 (SKDP…QQVG). Residues 20-35 (INGGPTGIGVSGGASD) show a composition bias toward gly residues. Residues 36–45 (GSGWSSENNP) are compositionally biased toward low complexity. Residues 46–74 (WGGGSGSGIHWGGGSGRGNGGGNGNSGGG) show a composition bias toward gly residues. Basic and acidic residues-rich tracts occupy residues 297-321 (VKQR…EAAE), 430-453 (QERR…ESKR), and 465-476 (PVGDKWLDDAGK). The segment covering 516 to 529 (SKNLNPSNKSSVSK) has biased composition (low complexity). Zn(2+) contacts are provided by histidine 550, histidine 575, and histidine 579.

This sequence belongs to the colicin/pyosin nuclease family.

This plasmid-coded bactericidal protein is an endonuclease active on both single- and double-stranded DNA but with undefined specificity. In terms of biological role, colicins are polypeptide toxins produced by and active against E.coli and closely related bacteria. The polypeptide is Colicin-E9 (col) (Escherichia coli).